A 512-amino-acid polypeptide reads, in one-letter code: Annexin A7 (512 aa).

Positions 14–38 (GYPGGDPSYPPAAQQAFPGGQFPPA) are enriched in low complexity. Disordered regions lie at residues 14–62 (GYPG…GYPH) and 146–190 (GGFS…AQPT). Positions 39–52 (AGGGAFPPASGGGN) are enriched in gly residues. Over residues 164–182 (MPGQMPGQMPGQAPSGYPS) the composition is skewed to low complexity. 4 Annexin repeats span residues 209–279 (FDAL…ALFM), 280–351 (PSTY…SIMA), 364–436 (QQAE…AVLQ), and 440–511 (NRPL…AISG).

Belongs to the annexin family.

Functionally, calcium/phospholipid-binding protein which promotes membrane fusion and is involved in exocytosis. This is Annexin A7 (anxa7) from Xenopus laevis (African clawed frog).